The chain runs to 226 residues: ATP synthase F(0) complex subunit a (226 aa).

A run of 6 helical transmembrane segments spans residues 12–32 (PTMMGLPIIMLIIMFPSILFP), 68–88 (WTLMLISLITFIGTTNLLGLL), 97–117 (QLSMNLGMAIPLWAGAVVTGF), 138–158 (IPMLIIIQTISLFIQPMALAV), 164–184 (ITAGHLLIHLIGGATLALMSI), and 189–209 (ASITFIILILLTILEFAVALI).

The protein belongs to the ATPase A chain family. In terms of assembly, component of the ATP synthase complex composed at least of ATP5F1A/subunit alpha, ATP5F1B/subunit beta, ATP5MC1/subunit c (homooctomer), MT-ATP6/subunit a, MT-ATP8/subunit 8, ATP5ME/subunit e, ATP5MF/subunit f, ATP5MG/subunit g, ATP5MK/subunit k, ATP5MJ/subunit j, ATP5F1C/subunit gamma, ATP5F1D/subunit delta, ATP5F1E/subunit epsilon, ATP5PF/subunit F6, ATP5PB/subunit b, ATP5PD/subunit d, ATP5PO/subunit OSCP. ATP synthase complex consists of a soluble F(1) head domain (subunits alpha(3) and beta(3)) - the catalytic core - and a membrane F(0) domain - the membrane proton channel (subunits c, a, 8, e, f, g, k and j). These two domains are linked by a central stalk (subunits gamma, delta, and epsilon) rotating inside the F1 region and a stationary peripheral stalk (subunits F6, b, d, and OSCP). Interacts with DNAJC30; interaction is direct.

It localises to the mitochondrion inner membrane. The catalysed reaction is H(+)(in) = H(+)(out). Its function is as follows. Subunit a, of the mitochondrial membrane ATP synthase complex (F(1)F(0) ATP synthase or Complex V) that produces ATP from ADP in the presence of a proton gradient across the membrane which is generated by electron transport complexes of the respiratory chain. ATP synthase complex consist of a soluble F(1) head domain - the catalytic core - and a membrane F(1) domain - the membrane proton channel. These two domains are linked by a central stalk rotating inside the F(1) region and a stationary peripheral stalk. During catalysis, ATP synthesis in the catalytic domain of F(1) is coupled via a rotary mechanism of the central stalk subunits to proton translocation. With the subunit c (ATP5MC1), forms the proton-conducting channel in the F(0) domain, that contains two crucial half-channels (inlet and outlet) that facilitate proton movement from the mitochondrial intermembrane space (IMS) into the matrix. Protons are taken up via the inlet half-channel and released through the outlet half-channel, following a Grotthuss mechanism. The protein is ATP synthase F(0) complex subunit a of Dasypus novemcinctus (Nine-banded armadillo).